The primary structure comprises 112 residues: Protein ORF1 (112 aa).

Residues 1–10 (MEGTDWSGWG) show a composition bias toward low complexity. Residues 1 to 20 (MEGTDWSGWGDDSDFPWPKG) form a disordered region. The helical transmembrane segment at 51–71 (IAFVILIVSLFVLLLGVLLAC) threads the bilayer.

The protein localises to the host membrane. The sequence is that of Protein ORF1 from Snake adenovirus serotype 1 (SnAdV-1).